The primary structure comprises 320 residues: MQANQDTHNAQSKLTDSNESTGDKLSILVVSGRSGSGKTSVLNILEDLGFYSIDNLPLSLVPEAAQKLVCDSGIKRIALGVDIRTPRADLSNFDAIHDSLKQTYGEEAVTVMYVTAQEETLVARFNATRRIHPLMVLDTKGVENNVYNLPAAIEKEIQLLQPIFKHADIKIDTSMLNIHQLKERLRDYVGVDNQIVINLLSFGFKYGSPIDADFVFDVRILPNPHWNPTLRSATGLDAEVSAFFADYPEVAEMTGDIATFLNRWLPDFLHNNRHTVTVAIGCTGGKHRSVFITKHLQDRLQNSLPEGLTVTAKHREKHRW.

Residue 32–39 participates in ATP binding; that stretch reads GRSGSGKT. A GTP-binding site is contributed by 82-85; it reads DIRT.

The protein belongs to the RapZ-like family.

Displays ATPase and GTPase activities. This is Nucleotide-binding protein Pcryo_0127 from Psychrobacter cryohalolentis (strain ATCC BAA-1226 / DSM 17306 / VKM B-2378 / K5).